The following is a 272-amino-acid chain: Bis(5'-nucleosyl)-tetraphosphatase, symmetrical (272 aa).

The protein belongs to the Ap4A hydrolase family.

The catalysed reaction is P(1),P(4)-bis(5'-adenosyl) tetraphosphate + H2O = 2 ADP + 2 H(+). Hydrolyzes diadenosine 5',5'''-P1,P4-tetraphosphate to yield ADP. This Wigglesworthia glossinidia brevipalpis protein is Bis(5'-nucleosyl)-tetraphosphatase, symmetrical.